Consider the following 220-residue polypeptide: Vesicle-associated membrane protein 7 (220 aa).

N-acetylalanine is present on A2. Residues 2–188 (AILFAVVARG…ARAMCMKNLK (187 aa)) are Cytoplasmic-facing. The 104-residue stretch at 7–110 (VVARGTTILA…AMNSEFSSVL (104 aa)) folds into the Longin domain. The region spanning 125–185 (KVMETQAQVD…RNLARAMCMK (61 aa)) is the v-SNARE coiled-coil homology domain. Phosphoserine is present on residues S167 and S168. A helical; Anchor for type IV membrane protein transmembrane segment spans residues 189-209 (LTIIIIIISVVFIYIIVSPLC). Residues 210–220 (GGFTWPNCVKK) lie on the Vesicular side of the membrane.

It belongs to the synaptobrevin family. In terms of assembly, component of the SNARE complex composed of STX4, SNAP23 and VAMP7 that binds SYT7 during lysosomal exocytosis. Component of the SNARE complex composed of STX7, STX8, VAMP7 and VTI1B that is required for heterotypic fusion of late endosomes with lysosomes. May interact with STX17. Interacts with PICALM. Interacts with RAB21.

It localises to the cytoplasmic vesicle. The protein resides in the secretory vesicle membrane. The protein localises to the golgi apparatus. It is found in the trans-Golgi network membrane. Its subcellular location is the late endosome membrane. It localises to the lysosome membrane. The protein resides in the endoplasmic reticulum membrane. The protein localises to the phagosome membrane. It is found in the synapse. Its subcellular location is the synaptosome. Functionally, involved in the targeting and/or fusion of transport vesicles to their target membrane during transport of proteins from the early endosome to the lysosome. Required for heterotypic fusion of late endosomes with lysosomes and homotypic lysosomal fusion. Required for calcium regulated lysosomal exocytosis. Involved in the export of chylomicrons from the endoplasmic reticulum to the cis Golgi. Required for exocytosis of mediators during eosinophil and neutrophil degranulation, and target cell killing by natural killer cells. Required for focal exocytosis of late endocytic vesicles during phagosome formation. This chain is Vesicle-associated membrane protein 7 (VAMP7), found in Bos taurus (Bovine).